We begin with the raw amino-acid sequence, 521 residues long: Ankyrin repeat domain-containing protein 34B (521 aa).

4 ANK repeats span residues 9 to 38, 42 to 79, 83 to 113, and 117 to 146; these read TESN…YINE, RGET…DPNI, FGKT…DPSL, and TGFS…AKGK. The segment at 161–188 is disordered; sequence QTTRQYLNVPPSPGIEGNNSPSPCTSPS. Residues 177 to 188 are compositionally biased toward polar residues; sequence GNNSPSPCTSPS.

Belongs to the ANKRD34 family.

Its subcellular location is the cytoplasm. The protein resides in the nucleus. This chain is Ankyrin repeat domain-containing protein 34B (ankrd34b), found in Xenopus laevis (African clawed frog).